Reading from the N-terminus, the 230-residue chain is Uracil-DNA glycosylase (230 aa).

Aspartate 70 serves as the catalytic Proton acceptor.

This sequence belongs to the uracil-DNA glycosylase (UDG) superfamily. UNG family.

The protein localises to the cytoplasm. The enzyme catalyses Hydrolyzes single-stranded DNA or mismatched double-stranded DNA and polynucleotides, releasing free uracil.. Excises uracil residues from the DNA which can arise as a result of misincorporation of dUMP residues by DNA polymerase or due to deamination of cytosine. The polypeptide is Uracil-DNA glycosylase (Campylobacter concisus (strain 13826)).